Here is a 75-residue protein sequence, read N- to C-terminus: Dermaseptin-DA2 (75 aa).

The N-terminal stretch at 1-22 is a signal peptide; the sequence is MALVKKSLFLVLFLGLVSLSIC. The propeptide occupies 23–42; sequence EEKRENEDEEEQEDDEQSEE.

The protein belongs to the frog skin active peptide (FSAP) family. Dermaseptin subfamily. Expressed by the skin glands.

The protein resides in the secreted. Possesses a potent antimicrobial activity against Gram-positive and Gram-negative bacteria. Probably acts by disturbing membrane functions with its amphipathic structure. In Agalychnis dacnicolor (Giant Mexican leaf frog), this protein is Dermaseptin-DA2.